A 167-amino-acid polypeptide reads, in one-letter code: Ribonuclease P protein subunit p20 (167 aa).

A disordered region spans residues 1 to 36 (MMGSNYPEHGTKPRSAKYHKQQNHRVVRKQPPRPAV). Basic residues predominate over residues 12 to 31 (KPRSAKYHKQQNHRVVRKQP).

As to quaternary structure, interacts with Smn.

Its subcellular location is the nucleus. The protein localises to the nucleolus. It is found in the cytoplasm. The protein resides in the cytoplasmic granule. In terms of biological role, component of ribonuclease P, a protein complex that generates mature tRNA molecules by cleaving their 5'-ends. Also a component of RNase MRP complex, which cleaves pre-rRNA sequences. This Drosophila melanogaster (Fruit fly) protein is Ribonuclease P protein subunit p20.